A 360-amino-acid chain; its full sequence is Protein Wnt-2 (360 aa).

An N-terminal signal peptide occupies residues 1 to 25 (MNAPVGGIWLWLPLLLTWLSPEVSS). Cystine bridges form between Cys76/Cys87, Cys127/Cys135, Cys137/Cys157, Cys206/Cys220, Cys208/Cys215, Cys278/Cys309, Cys294/Cys304, Cys308/Cys348, Cys324/Cys339, Cys326/Cys336, and Cys331/Cys332. Residue Ser212 is the site of O-palmitoleoyl serine; by PORCN attachment. Asn295 is a glycosylation site (N-linked (GlcNAc...) asparagine).

This sequence belongs to the Wnt family. Palmitoleoylation is required for efficient binding to frizzled receptors. Depalmitoleoylation leads to Wnt signaling pathway inhibition.

It is found in the secreted. The protein resides in the extracellular space. It localises to the extracellular matrix. Ligand for members of the frizzled family of seven transmembrane receptors. Probable developmental protein. May be a signaling molecule which affects the development of discrete regions of tissues. Is likely to signal over only few cell diameters. The chain is Protein Wnt-2 (WNT2) from Rhinolophus ferrumequinum (Greater horseshoe bat).